A 450-amino-acid chain; its full sequence is Glutamate--tRNA ligase 2 (450 aa).

Positions 10 to 20 (PSPTGFLHIGG) match the 'HIGH' region motif. The short motif at 232–236 (KLSKR) is the 'KMSKS' region element. Residue Lys-235 participates in ATP binding.

Belongs to the class-I aminoacyl-tRNA synthetase family. Glutamate--tRNA ligase type 1 subfamily. As to quaternary structure, monomer.

The protein localises to the cytoplasm. It carries out the reaction tRNA(Glu) + L-glutamate + ATP = L-glutamyl-tRNA(Glu) + AMP + diphosphate. Functionally, catalyzes the attachment of glutamate to tRNA(Glu) in a two-step reaction: glutamate is first activated by ATP to form Glu-AMP and then transferred to the acceptor end of tRNA(Glu). This chain is Glutamate--tRNA ligase 2, found in Wolbachia pipientis subsp. Culex pipiens (strain wPip).